Here is a 72-residue protein sequence, read N- to C-terminus: Protein kish-A (72 aa).

Positions 1–26 (MSAIFNFQSLLTVILLLICTCAYIRS) are cleaved as a signal peptide. At 27-53 (LAPSLLDKNKTGLLGIFWKCARIGERK) the chain is on the extracellular side. Asn-35 carries an N-linked (GlcNAc...) asparagine glycan. The chain crosses the membrane as a helical span at residues 54-71 (SPYVAVCCVVMAFSILFV). A topological domain (cytoplasmic) is located at residue Gln-72.

Belongs to the KISH family.

The protein localises to the golgi apparatus membrane. In terms of biological role, involved in the early part of the secretory pathway. This Gallus gallus (Chicken) protein is Protein kish-A (TMEM167A).